Here is a 476-residue protein sequence, read N- to C-terminus: MARDTQGTQGTQSQASNIWTQVESQPMEKIVWGRLYGKNIKIKSLGTSSKYRIIYTHSSFSVDLNNDEFTAGRGEANDLILTLNDLPEKILTRISKVHFIIKRANCELTNPVYIQDLSRNGTFVNNEKIGTNRMRILKNDDVISLSHPTYKAFVFKDLSPNESIGLPEEINKTYYVNRKLGSGAYGLVRLVYDTRTCQQFAMKIVKKNMLSGARPSTNFSDPDRVLNEAKIMKNLSHPCVVRMHDIVDKPDSVYMVLEFMRGGDLLNRIISNKLLSEDISKLYFYQMCHAVKYLHDRGITHRDLKPDNVLLETNDEETLLKVSDFGLSKFVQKDSVMRTLCGTPLYVAPEVLITGGREAYTKKVDIWSLGVVLFTCLSGTLPFSDEYGTPAAQQIKKGRFAYGHPSWKSVSQRAKLLINQMLIVDPERRPSIDDVLQSSWLRDAPMLQKAKRLMKLDGMEIEEENFLEPPTKRSRR.

The FHA domain occupies 69–129 (FTAGRGEAND…NGTFVNNEKI (61 aa)). The 268-residue stretch at 174–441 (YYVNRKLGSG…IDDVLQSSWL (268 aa)) folds into the Protein kinase domain. Residues 180 to 188 (LGSGAYGLV) and lysine 203 contribute to the ATP site. Aspartate 303 (proton acceptor) is an active-site residue.

This sequence belongs to the protein kinase superfamily. CAMK Ser/Thr protein kinase family. CDS1 subfamily. In stage 3 embryos, both isoforms are expressed in both somatic and pole cell nuclei. Expression in pole cell nuclei is sustained until stage 9 and weakly expressed after pole cell invagination into the abdominal cavity.

It is found in the nucleus speckle. The enzyme catalyses L-seryl-[protein] + ATP = O-phospho-L-seryl-[protein] + ADP + H(+). The catalysed reaction is L-threonyl-[protein] + ATP = O-phospho-L-threonyl-[protein] + ADP + H(+). Its function is as follows. May have a role in germline establishment. The sequence is that of Ovarian-specific serine/threonine-protein kinase Lok (lok) from Drosophila melanogaster (Fruit fly).